Here is a 1081-residue protein sequence, read N- to C-terminus: Probable cellulose synthase A catalytic subunit 8 [UDP-forming] (1081 aa).

Residues 1-277 are Cytoplasmic-facing; the sequence is MDGDADAVKS…PSSRINPYRM (277 aa). Zn(2+) is bound by residues Cys19, Cys22, Cys38, Cys41, Cys46, Cys49, Cys61, and Cys64. An RING-type; degenerate zinc finger spans residues 19–65; the sequence is CQICGDGVGTTAEGDVFAACDVCGFPVCRPCYEYERKDGTQACPQCK. A disordered region spans residues 72–148; it reads KGSPAIRGEE…YDSGEIPRGY (77 aa). The span at 81–91 shows a compositional bias: acidic residues; sequence EGEDTDADDVS. The span at 103 to 112 shows a compositional bias: basic and acidic residues; the sequence is QKQKIADRMR. The chain crosses the membrane as a helical span at residues 278–298; sequence VIVLRLVVLSIFLHYRITNPV. The Extracellular portion of the chain corresponds to 299 to 300; sequence RN. Residues 301–321 form a helical membrane-spanning segment; the sequence is AYPLWLLSVICEIWFALSWIL. The Cytoplasmic portion of the chain corresponds to 322–864; it reads DQFPKWFPIN…INTTIYPLTS (543 aa). 4 residues coordinate UDP-alpha-D-glucose: Ser360, Lys366, Glu367, and Asp396. Asp396 is a catalytic residue. Residues 450–477 adopt a coiled-coil conformation; it reads VKDRRAMKREYEEFKVRINGLVAKAQKV. Lys537 provides a ligand contact to UDP-alpha-D-glucose. Residues Lys538 and Asp562 each contribute to the Mn(2+) site. The segment at 660–684 is disordered; it reads SLCGGRKKASKSKKKSSDKKKSNKH. The segment covering 664-682 has biased composition (basic residues); that stretch reads GRKKASKSKKKSSDKKKSN. Asp781 is an active-site residue. Residues 865–885 traverse the membrane as a helical segment; it reads IPLLIYCVLPAICLLTGKFII. Over 886–890 the chain is Extracellular; that stretch reads PEISN. The chain crosses the membrane as a helical span at residues 891–911; that stretch reads FASIWFISLFISIFATGILEM. Residues 912–926 lie on the Cytoplasmic side of the membrane; the sequence is RWSGVGIDEWWRNEQ. The chain crosses the membrane as a helical span at residues 927-947; sequence FWVIGGISAHLFAVFQGLLKV. Topologically, residues 948–977 are extracellular; it reads LAGIDTNFTVTSKASDEDGDFAELYMFKWT. Asn954 carries N-linked (GlcNAc...) asparagine glycosylation. Residues 978–998 form a helical membrane-spanning segment; it reads TLLIPPTTILIINLVGVVAGI. At 999–1009 the chain is on the cytoplasmic side; sequence SYAINSGYQSW. The chain crosses the membrane as a helical span at residues 1010–1030; sequence GPLFGKLFFAFWVIVHLYPFL. Residues 1031–1039 are Extracellular-facing; the sequence is KGLMGRQNR. A helical membrane pass occupies residues 1040 to 1060; sequence TPTIVVVWAILLASIFSLLWV. Topologically, residues 1061–1081 are cytoplasmic; that stretch reads RIDPFTTRVTGPDTQTCGINC.

Belongs to the glycosyltransferase 2 family. Plant cellulose synthase subfamily. The cofactor is Mn(2+). Requires Zn(2+) as cofactor.

It localises to the cell membrane. It carries out the reaction [(1-&gt;4)-beta-D-glucosyl](n) + UDP-alpha-D-glucose = [(1-&gt;4)-beta-D-glucosyl](n+1) + UDP + H(+). It functions in the pathway glycan metabolism; plant cellulose biosynthesis. Its function is as follows. Probable catalytic subunit of cellulose synthase terminal complexes ('rosettes'), required for beta-1,4-glucan microfibril crystallization, a major mechanism of the cell wall formation. The chain is Probable cellulose synthase A catalytic subunit 8 [UDP-forming] (CESA8) from Oryza sativa subsp. japonica (Rice).